Here is a 945-residue protein sequence, read N- to C-terminus: Isoleucine--tRNA ligase (945 aa).

A 'HIGH' region motif is present at residues 66 to 76 (PYANGDIHLGH). Residue glutamate 581 coordinates L-isoleucyl-5'-AMP. Residues 622 to 626 (KMSKS) carry the 'KMSKS' region motif. Position 625 (lysine 625) interacts with ATP. The Zn(2+) site is built by cysteine 908, cysteine 911, cysteine 928, and cysteine 931.

It belongs to the class-I aminoacyl-tRNA synthetase family. IleS type 1 subfamily. As to quaternary structure, monomer. Zn(2+) is required as a cofactor.

Its subcellular location is the cytoplasm. The catalysed reaction is tRNA(Ile) + L-isoleucine + ATP = L-isoleucyl-tRNA(Ile) + AMP + diphosphate. Functionally, catalyzes the attachment of isoleucine to tRNA(Ile). As IleRS can inadvertently accommodate and process structurally similar amino acids such as valine, to avoid such errors it has two additional distinct tRNA(Ile)-dependent editing activities. One activity is designated as 'pretransfer' editing and involves the hydrolysis of activated Val-AMP. The other activity is designated 'posttransfer' editing and involves deacylation of mischarged Val-tRNA(Ile). This Burkholderia ambifaria (strain ATCC BAA-244 / DSM 16087 / CCUG 44356 / LMG 19182 / AMMD) (Burkholderia cepacia (strain AMMD)) protein is Isoleucine--tRNA ligase.